A 130-amino-acid chain; its full sequence is Acyl carrier protein 2, chloroplastic (130 aa).

A chloroplast-targeting transit peptide spans 1–48 (MASITGSSVSFKCAPLQSSFNSKNYALKSSVTFWRRTPVMPRGLSVSC). A Carrier domain is found at 52 to 127 (PEMVTKVSDI…EAADMIEALQ (76 aa)). Ser87 is subject to O-(pantetheine 4'-phosphoryl)serine.

The protein belongs to the acyl carrier protein (ACP) family. In terms of processing, 4'-phosphopantetheine is transferred from CoA to a specific serine of apo-ACP by acpS. This modification is essential for activity because fatty acids are bound in thioester linkage to the sulfhydryl of the prosthetic group. In terms of tissue distribution, roots, leaves and seeds.

It is found in the plastid. Its subcellular location is the chloroplast. It participates in lipid metabolism; fatty acid biosynthesis. Carrier of the growing fatty acid chain in fatty acid biosynthesis. The protein is Acyl carrier protein 2, chloroplastic (ACL1.2) of Spinacia oleracea (Spinach).